A 400-amino-acid chain; its full sequence is Na(+)/H(+) antiporter NhaA (400 aa).

12 helical membrane passes run 26–46 (AGGI…NSPL), 71–91 (LIHW…GMEV), 107–127 (IFPA…YWFI), 137–157 (GWAI…ALLS), 166–186 (IFLL…IALF), 189–209 (HGLS…LILL), 212–232 (FKVS…ASVL), 233–253 (KSGV…PLKG), 273–293 (FVIL…GIDV), 299–319 (PLLL…IFGF), 340–360 (IFAV…LASL), and 373–393 (LSRL…YLFL).

It belongs to the NhaA Na(+)/H(+) (TC 2.A.33) antiporter family.

The protein resides in the cell inner membrane. It carries out the reaction Na(+)(in) + 2 H(+)(out) = Na(+)(out) + 2 H(+)(in). Na(+)/H(+) antiporter that extrudes sodium in exchange for external protons. In Haemophilus influenzae (strain 86-028NP), this protein is Na(+)/H(+) antiporter NhaA.